The sequence spans 289 residues: Right origin-binding protein (289 aa).

The 99-residue stretch at 8–106 folds into the HTH araC/xylS-type domain; sequence RDLLIWLEGH…AQTPALYRRS (99 aa). DNA-binding regions (H-T-H motif) lie at residues 25-46 and 73-96; these read DNVA…KDVT and ILDI…KKQF.

Transcriptional regulator. Binds to the right arm of the replication origin oriC of the chromosome. Rob binding may influence the formation of the nucleoprotein structure, required for oriC function in the initiation of replication. The chain is Right origin-binding protein (rob) from Escherichia coli O157:H7.